The sequence spans 456 residues: Anthocyanidin 3-O-galactosyltransferase F3GT1 (456 aa).

An anthocyanidin contacts are provided by serine 20, histidine 22, and glutamine 83. Residue histidine 22 is the Proton acceptor of the active site. Aspartate 118 serves as the catalytic Charge relay. Histidine 150 serves as a coordination point for an anthocyanidin. Positions 281, 333, 334, 351, 355, 356, and 359 each coordinate UDP. Glycine 374 contributes to the an anthocyanidin binding site.

This sequence belongs to the UDP-glycosyltransferase family. In terms of tissue distribution, expressed at low levels in stems and leaves. Expressed in ovaries.

It catalyses the reaction cyanidin + UDP-alpha-D-galactose = cyanidin 3-O-beta-D-galactoside + UDP + H(+). Its pathway is pigment biosynthesis; anthocyanin biosynthesis. Functionally, involved in anthocyanin biosynthesis by catalyzing the galactosylation of cyanidin. Required for the accumulation of anthocyanin in red-fleshed kiwifruit varieties. Seems to be the key enzyme regulating the accumulation of anthocyanin in red-fleshed kiwi fruits. The chain is Anthocyanidin 3-O-galactosyltransferase F3GT1 from Actinidia chinensis var. chinensis (Chinese soft-hair kiwi).